A 246-amino-acid chain; its full sequence is MKTVVIIAASGVGKRMKLDGGRSKQMLEIGGQPVIWHTMKAFQEASTVESVYIATLPDSIPVFKEIAKANGFTKITAIIEGGKERQDSIGNCMKLIEQEIENSGVMPDAILVHDGARPFIQPEEIDDIARLSATHGACVPATKPKDTIKYVGCNPEIFGETLDRSRLLQVQTPQGFAPAKLIEAHRLAGEEQWYATDDAALVERYFPQQAIRIYETGYHNIKITTPEDVFIGEAILAGLKARKSKN.

This sequence belongs to the IspD/TarI cytidylyltransferase family. IspD subfamily.

It carries out the reaction 2-C-methyl-D-erythritol 4-phosphate + CTP + H(+) = 4-CDP-2-C-methyl-D-erythritol + diphosphate. It participates in isoprenoid biosynthesis; isopentenyl diphosphate biosynthesis via DXP pathway; isopentenyl diphosphate from 1-deoxy-D-xylulose 5-phosphate: step 2/6. In terms of biological role, catalyzes the formation of 4-diphosphocytidyl-2-C-methyl-D-erythritol from CTP and 2-C-methyl-D-erythritol 4-phosphate (MEP). The sequence is that of 2-C-methyl-D-erythritol 4-phosphate cytidylyltransferase from Chlorobaculum tepidum (strain ATCC 49652 / DSM 12025 / NBRC 103806 / TLS) (Chlorobium tepidum).